The chain runs to 105 residues: uncharacterized protein (105 aa).

Residues 33–100 (LYALDAGTTD…SEDLRVLVVF (68 aa)) enclose the Cupin type-2 domain.

This is an uncharacterized protein from Streptomyces coelicolor (strain ATCC BAA-471 / A3(2) / M145).